The following is a 77-amino-acid chain: MKLMIFTGLVLFAIVSLIEAQAENEKPCLPEYKVCTHAPGNCCSDLVCDRYGRYKSGAQIGRNCFCLQKGVIYKREN.

The signal sequence occupies residues 1–20 (MKLMIFTGLVLFAIVSLIEA). Positions 21–26 (QAENEK) are excised as a propeptide.

The protein belongs to the neurotoxin 19 (CSTX) family. 08 (U8-Lctx) subfamily. Post-translationally, contains 4 disulfide bonds. As to expression, expressed by the venom gland.

It is found in the secreted. In Lycosa singoriensis (Wolf spider), this protein is U8-lycotoxin-Ls1n.